The chain runs to 254 residues: Alcohol dehydrogenase (254 aa).

Residue 10-33 participates in NAD(+) binding; the sequence is FVAGLGGIGLDTSREIVKSGPKNL. Residue S138 participates in substrate binding. Y151 (proton acceptor) is an active-site residue.

The protein belongs to the short-chain dehydrogenases/reductases (SDR) family. Homodimer.

It carries out the reaction a primary alcohol + NAD(+) = an aldehyde + NADH + H(+). It catalyses the reaction a secondary alcohol + NAD(+) = a ketone + NADH + H(+). This chain is Alcohol dehydrogenase (Adh), found in Drosophila picticornis (Fruit fly).